A 220-amino-acid polypeptide reads, in one-letter code: Ribose-5-phosphate isomerase A (220 aa).

Substrate is bound by residues 25 to 28 (TGST), 80 to 83 (DGAD), and 93 to 96 (KGGG). The active-site Proton acceptor is the Glu-102. Residue Lys-120 participates in substrate binding.

It belongs to the ribose 5-phosphate isomerase family. In terms of assembly, homodimer.

The catalysed reaction is aldehydo-D-ribose 5-phosphate = D-ribulose 5-phosphate. It functions in the pathway carbohydrate degradation; pentose phosphate pathway; D-ribose 5-phosphate from D-ribulose 5-phosphate (non-oxidative stage): step 1/1. Catalyzes the reversible conversion of ribose-5-phosphate to ribulose 5-phosphate. This chain is Ribose-5-phosphate isomerase A, found in Bacillus anthracis.